The sequence spans 971 residues: U2 snRNP component HSH155 (971 aa).

Disordered stretches follow at residues 1 to 22 (MSHPIQFVNANNSDKSHQLGGQ) and 54 to 118 (TRTV…AVKE). The segment covering 8 to 22 (VNANNSDKSHQLGGQ) has biased composition (polar residues). Residues 54–75 (TRTVQNREDSYHKRRFDMKFEP) are compositionally biased toward basic and acidic residues. The span at 78 to 90 (DTQTVTSSENTQD) shows a compositional bias: polar residues. HEAT repeat units lie at residues 199–237 (MIFNRLLPILLDRSLEDQERHLMIKTIDRVLYQLGDLTK), 273–310 (AGLKTILTVMRPDIENEDEYVRNVTSRAAAVVAKALGV), 350–387 (NHLTGLMSCIKDCLMDDHVPVRIVTAHTLSTLAENSYP), 513–550 (LGCSYTIDKLLTPLRDEAEPFRTMAVHAVTRTVNLLGT), 596–633 (PFLAPIVSTILNHLKHKTPLVRQHAADLCAILIPVIKN), 680–717 (PPINQILPTLTPILRNKHRKVEVNTIKFVGLIGKLAPT), 722–759 (KEWMRICFELLELLKSTNKEIRRSANATFGFIAEAIGP), 792–829 (CGPYNVLPVIMNEYTTPETNVQNGVLKAMSFMFEYIGN), and 832–870 (KDYIYFITPLLEDALTDRDLVHRQTASNVITHLALNCSG).

This sequence belongs to the SF3B1 family. In terms of assembly, belongs to the CWC complex (or CEF1-associated complex), a spliceosome sub-complex reminiscent of a late-stage spliceosome composed of the U2, U5 and U6 snRNAs and at least BUD13, BUD31, BRR2, CDC40, CEF1, CLF1, CUS1, CWC2, CWC15, CWC21, CWC22, CWC23, CWC24, CWC25, CWC27, ECM2, HSH155, IST3, ISY1, LEA1, MSL1, NTC20, PRP8, PRP9, PRP11, PRP19, PRP21, PRP22, PRP45, PRP46, SLU7, SMB1, SMD1, SMD2, SMD3, SMX2, SMX3, SNT309, SNU114, SPP2, SYF1, SYF2, RSE1 and YJU2. Interacts with RDS3.

It localises to the nucleus. Functionally, contacts pre-mRNA on both sides of the branch site early in spliceosome assembly. The protein is U2 snRNP component HSH155 (HSH155) of Saccharomyces cerevisiae (strain ATCC 204508 / S288c) (Baker's yeast).